We begin with the raw amino-acid sequence, 109 residues long: uncharacterized protein (109 aa).

The region spanning Leu42–Val100 is the HTH cro/C1-type domain. The H-T-H motif DNA-binding region spans Arg53 to Arg72.

This is an uncharacterized protein from Rickettsia conorii (strain ATCC VR-613 / Malish 7).